The chain runs to 352 residues: Ion-translocating oxidoreductase complex subunit D (352 aa).

The next 5 membrane-spanning stretches (helical) occupy residues 20–40, 42–62, 78–109, 123–143, and 148–168; these read IMLLVLLAAVPGIAAQLRFFG, GTLVQILLASVSALLAEALVL, ALLTGLLLAVSIPPLAPWWMVVLGTVFAVIIA, PAMIGYVVLLISFPVQMTSWL, and IAVNIPGFIDAIQVIFSGHTA. Thr-187 carries the FMN phosphoryl threonine modification. The next 4 helical transmembrane spans lie at 214-234, 242-262, 267-287, and 301-318; these read ILAGAGWQWVNLAWLAGGVWL, WHIPLSFLVTLALCATLGWLF, LAAPQIHLLSGATMLGAFFIL, and LMFGALAGLLVWLIRSFG.

The protein belongs to the NqrB/RnfD family. As to quaternary structure, the complex is composed of six subunits: RsxA, RsxB, RsxC, RsxD, RsxE and RsxG. Requires FMN as cofactor.

The protein localises to the cell inner membrane. In terms of biological role, part of a membrane-bound complex that couples electron transfer with translocation of ions across the membrane. Required to maintain the reduced state of SoxR. In Shigella flexneri, this protein is Ion-translocating oxidoreductase complex subunit D.